The chain runs to 451 residues: Probable V-type proton ATPase subunit H 1 (451 aa).

It belongs to the V-ATPase H subunit family. As to quaternary structure, V-ATPase is a heteromultimeric enzyme made up of two complexes: the ATP-hydrolytic V1 complex and the proton translocation V0 complex. The V1 complex consists of three catalytic AB heterodimers that form a heterohexamer, three peripheral stalks each consisting of EG heterodimers, one central rotor including subunits D and F, and the regulatory subunits C and H. The proton translocation complex V0 consists of the proton transport subunit a, a ring of proteolipid subunits c9c'', rotary subunit d, subunits e and f, and the accessory subunits vah-19/Ac45 and vah-20/PRR.

Functionally, subunit of the V1 complex of vacuolar(H+)-ATPase (V-ATPase), a multisubunit enzyme composed of a peripheral complex (V1) that hydrolyzes ATP and a membrane integral complex (V0) that translocates protons. V-ATPase is responsible for acidifying and maintaining the pH of intracellular compartments and in some cell types, is targeted to the plasma membrane, where it is responsible for acidifying the extracellular environment. Subunit H is essential for V-ATPase activity, but not for the assembly of the complex. This chain is Probable V-type proton ATPase subunit H 1, found in Caenorhabditis elegans.